The following is a 214-amino-acid chain: MSEHETAGEGRFNSIEVRVLGSLIEKQATSPESYPLTLNALVLACNQKTSREPVMNLTQGQVGQALRVLEGQGMTRLQMGSRADRWEHRVDKALELVPAQLVLMGLMFLRGPQTLNELLTRSNRLHDFDDTEQIQHQLERLISRGLALHLPRQAGQREDRYTHALGDPAEIEAILAARQQEGGGRSGGSVSEERIEALEARIAALEARLAELEG.

Belongs to the UPF0502 family.

This is UPF0502 protein Pput_3252 from Pseudomonas putida (strain ATCC 700007 / DSM 6899 / JCM 31910 / BCRC 17059 / LMG 24140 / F1).